The primary structure comprises 377 residues: Glutamate 5-kinase (377 aa).

Lys-20 contributes to the ATP binding site. Substrate is bound by residues Ser-60, Asp-147, and Asn-159. 179-180 is a binding site for ATP; the sequence is TD. Positions 285-363 constitute a PUA domain; sequence AGRLVIDDGA…DKVYQVLGEA (79 aa).

Belongs to the glutamate 5-kinase family.

Its subcellular location is the cytoplasm. It carries out the reaction L-glutamate + ATP = L-glutamyl 5-phosphate + ADP. Its pathway is amino-acid biosynthesis; L-proline biosynthesis; L-glutamate 5-semialdehyde from L-glutamate: step 1/2. Catalyzes the transfer of a phosphate group to glutamate to form L-glutamate 5-phosphate. The protein is Glutamate 5-kinase of Acinetobacter baumannii (strain SDF).